The following is a 326-amino-acid chain: Putative ankyrin repeat protein L25 (326 aa).

ANK repeat units lie at residues 11–40 (RSEY…DLNV), 42–65 (KLFY…NIHV), 66–95 (DDEF…DIHV), 96–125 (NDDA…DIHA), 127–154 (NELV…DIHA), 155–184 (EDDE…NFRA), 185–214 (ENDY…DIHA), 216–244 (DEYA…DIHA), 246–274 (NDYG…NIHA), and 275–304 (KDDY…NIHA).

This chain is Putative ankyrin repeat protein L25, found in Acanthamoeba polyphaga mimivirus (APMV).